A 283-amino-acid chain; its full sequence is Thymidylate synthase (283 aa).

A dUMP-binding site is contributed by Arg-22. The active-site Nucleophile is Cys-160. DUMP is bound by residues 180-183 (RSCD), Asn-191, and 221-223 (HIY). Asp-183 provides a ligand contact to (6R)-5,10-methylene-5,6,7,8-tetrahydrofolate. Ala-282 is a binding site for (6R)-5,10-methylene-5,6,7,8-tetrahydrofolate.

It belongs to the thymidylate synthase family. Bacterial-type ThyA subfamily. Homodimer.

The protein localises to the cytoplasm. It carries out the reaction dUMP + (6R)-5,10-methylene-5,6,7,8-tetrahydrofolate = 7,8-dihydrofolate + dTMP. It participates in pyrimidine metabolism; dTTP biosynthesis. In terms of biological role, catalyzes the reductive methylation of 2'-deoxyuridine-5'-monophosphate (dUMP) to 2'-deoxythymidine-5'-monophosphate (dTMP) while utilizing 5,10-methylenetetrahydrofolate (mTHF) as the methyl donor and reductant in the reaction, yielding dihydrofolate (DHF) as a by-product. This enzymatic reaction provides an intracellular de novo source of dTMP, an essential precursor for DNA biosynthesis. The polypeptide is Thymidylate synthase (Idiomarina loihiensis (strain ATCC BAA-735 / DSM 15497 / L2-TR)).